A 116-amino-acid chain; its full sequence is Neuropeptide Y receptor type 1 (116 aa).

A helical membrane pass occupies residues 1-6 (LVLIAV). Residues 7-24 (ERHQLIINPRGWRPSNRH) lie on the Cytoplasmic side of the membrane. The chain crosses the membrane as a helical span at residues 25 to 45 (AYVGIAVIWVLAVASSLPFLI). Residues 46-81 (YQVLTDEPFQNVTLDAFKDKYVCFDKFPSDSHRLSY) lie on the Extracellular side of the membrane. The N-linked (GlcNAc...) asparagine glycan is linked to Asn-56. The helical transmembrane segment at 82–102 (TTLLLVLQYFGPLCFIFICYF) threads the bilayer. Over 103–116 (KIYIRLKRRNNMMD) the chain is Cytoplasmic.

It belongs to the G-protein coupled receptor 1 family.

It is found in the cell membrane. In terms of biological role, receptor for neuropeptide Y and peptide YY. The polypeptide is Neuropeptide Y receptor type 1 (NPY1R) (Ovis aries (Sheep)).